Here is a 703-residue protein sequence, read N- to C-terminus: Probable ATP-dependent RNA helicase vasa-like (703 aa).

3 disordered regions span residues methionine 1 to glycine 22, asparagine 35 to glycine 73, and arginine 88 to phenylalanine 167. Gly residues predominate over residues serine 61–glycine 73. The CCHC-type 1 zinc-finger motif lies at cysteine 77–serine 92. The segment covering phenylalanine 146–arginine 155 has biased composition (gly residues). CCHC-type zinc fingers lie at residues cysteine 166–serine 181 and cysteine 189–asparagine 204. The Q motif motif lies at glutamate 261 to lysine 289. The 184-residue stretch at isoleucine 292–valine 475 folds into the Helicase ATP-binding domain. Alanine 305–threonine 312 lines the ATP pocket. The DEAD box signature appears at aspartate 419–aspartate 422. The region spanning methionine 506–alanine 651 is the Helicase C-terminal domain. Residues glycine 676–aspartate 703 are disordered.

It belongs to the DEAD box helicase family. DDX4/VASA subfamily. In terms of tissue distribution, expressed in ovaries and testis. Not expressed in somatic tissue of the ovaries including follicle cells, muscle and connective tissue.

The protein resides in the cytoplasm. It is found in the nucleus. It localises to the nucleolus. It carries out the reaction ATP + H2O = ADP + phosphate + H(+). Its function is as follows. Involved in translational control mechanisms operating in early stages of oogenesis. Required maternally in many stages of oogenesis, including cystocyte differentiation, oocyte differentiation, and specification of anterior-posterior polarity in the developing cysts. Essential for the formation and/or structural integrity of perinuclear nuage particles during germ cell formation. This chain is Probable ATP-dependent RNA helicase vasa-like, found in Penaeus vannamei (Whiteleg shrimp).